A 405-amino-acid chain; its full sequence is Glucose-1-phosphate adenylyltransferase (405 aa).

Alpha-D-glucose 1-phosphate is bound by residues glycine 164, 179–180, and serine 197; that span reads EK.

This sequence belongs to the bacterial/plant glucose-1-phosphate adenylyltransferase family. As to quaternary structure, homotetramer.

The enzyme catalyses alpha-D-glucose 1-phosphate + ATP + H(+) = ADP-alpha-D-glucose + diphosphate. It participates in glycan biosynthesis; glycogen biosynthesis. Functionally, involved in the biosynthesis of ADP-glucose, a building block required for the elongation reactions to produce glycogen. Catalyzes the reaction between ATP and alpha-D-glucose 1-phosphate (G1P) to produce pyrophosphate and ADP-Glc. The sequence is that of Glucose-1-phosphate adenylyltransferase from Corynebacterium jeikeium (strain K411).